The sequence spans 97 residues: Integration host factor subunit alpha (97 aa).

Belongs to the bacterial histone-like protein family. In terms of assembly, heterodimer of an alpha and a beta chain.

In terms of biological role, this protein is one of the two subunits of integration host factor, a specific DNA-binding protein that functions in genetic recombination as well as in transcriptional and translational control. This Acinetobacter baylyi (strain ATCC 33305 / BD413 / ADP1) protein is Integration host factor subunit alpha.